We begin with the raw amino-acid sequence, 366 residues long: Cobalt-precorrin-5B C(1)-methyltransferase (366 aa).

The protein belongs to the CbiD family.

The enzyme catalyses Co-precorrin-5B + S-adenosyl-L-methionine = Co-precorrin-6A + S-adenosyl-L-homocysteine. It functions in the pathway cofactor biosynthesis; adenosylcobalamin biosynthesis; cob(II)yrinate a,c-diamide from sirohydrochlorin (anaerobic route): step 6/10. In terms of biological role, catalyzes the methylation of C-1 in cobalt-precorrin-5B to form cobalt-precorrin-6A. The protein is Cobalt-precorrin-5B C(1)-methyltransferase of Pseudomonas aeruginosa (strain UCBPP-PA14).